The following is a 493-amino-acid chain: Dipeptide permease D (493 aa).

13 helical membrane-spanning segments follow: residues 14-34 (VVAL…LLIL), 49-69 (ELFS…GYLA), 91-111 (LVLG…AIIV), 138-158 (GGFS…PIAC), 167-187 (WAMG…IFLC), 212-232 (NWGW…VLFW), 235-255 (WSVY…AKIY), 267-287 (LGLI…AQQG), 312-332 (MFQS…AWLV), 344-364 (IWGK…ILTL), 379-399 (LMVL…PVAM), 413-433 (VLTG…AGVI), and 458-478 (VFEQ…LIWL).

Belongs to the major facilitator superfamily. Proton-dependent oligopeptide transporter (POT/PTR) (TC 2.A.17) family. DtpD subfamily.

The protein resides in the cell inner membrane. Probable proton-dependent permease that transports dipeptides. This is Dipeptide permease D from Salmonella choleraesuis (strain SC-B67).